The following is a 357-amino-acid chain: Putative DNA directed RNA polymerase subunit R470 (357 aa).

Belongs to the archaeal Rpo11/eukaryotic RPB11/RPC19 RNA polymerase subunit family.

The protein localises to the virion. It catalyses the reaction RNA(n) + a ribonucleoside 5'-triphosphate = RNA(n+1) + diphosphate. This Acanthamoeba polyphaga mimivirus (APMV) protein is Putative DNA directed RNA polymerase subunit R470.